The sequence spans 270 residues: Insulin-like growth factor-binding protein-like 1 (270 aa).

The first 17 residues, 1 to 17 (MPRLPLLLLLLPSLARG), serve as a signal peptide directing secretion. The IGFBP N-terminal domain occupies 26 to 101 (RHPECSPCQQ…PEGTGLCVCA (76 aa)). 7 cysteine pairs are disulfide-bonded: cysteine 30-cysteine 55, cysteine 33-cysteine 57, cysteine 38-cysteine 58, cysteine 44-cysteine 61, cysteine 69-cysteine 83, cysteine 77-cysteine 98, and cysteine 107-cysteine 143. One can recognise a Kazal-like domain in the interval 87–145 (ASGTAPEGTGLCVCAQRGAVCGSDGRSYSSICALRLRARHAPRAHHGHLHKARDGPCEF). Positions 147 to 251 (PVVLMPPRDI…GEAQSHGTVT (105 aa)) constitute an Ig-like C2-type domain. N-linked (GlcNAc...) asparagine glycosylation occurs at asparagine 158. A disulfide bond links cysteine 168 and cysteine 235.

It is found in the secreted. Its function is as follows. IGF-binding proteins prolong the half-life of IGFs and have been shown to either inhibit or stimulate the growth promoting effects of the IGFs in cell culture. They alter the interaction of IGFs with their cell surface receptors. In Mus musculus (Mouse), this protein is Insulin-like growth factor-binding protein-like 1 (Igfbpl1).